The following is a 445-amino-acid chain: Phosphoglucosamine mutase (445 aa).

The active-site Phosphoserine intermediate is the serine 102. Positions 102, 240, 242, and 244 each coordinate Mg(2+). Residue serine 102 is modified to Phosphoserine.

It belongs to the phosphohexose mutase family. Requires Mg(2+) as cofactor. Activated by phosphorylation.

It carries out the reaction alpha-D-glucosamine 1-phosphate = D-glucosamine 6-phosphate. Its function is as follows. Catalyzes the conversion of glucosamine-6-phosphate to glucosamine-1-phosphate. The chain is Phosphoglucosamine mutase from Mycobacterium ulcerans (strain Agy99).